A 297-amino-acid polypeptide reads, in one-letter code: Acetyl-coenzyme A carboxylase carboxyl transferase subunit beta (297 aa).

Positions 25–294 (LWVKCPETGQ…VPPKGRLPAP (270 aa)) constitute a CoA carboxyltransferase N-terminal domain.

It belongs to the AccD/PCCB family. In terms of assembly, acetyl-CoA carboxylase is a heterohexamer composed of biotin carboxyl carrier protein (AccB), biotin carboxylase (AccC) and two subunits each of ACCase subunit alpha (AccA) and ACCase subunit beta (AccD).

It localises to the cytoplasm. The enzyme catalyses N(6)-carboxybiotinyl-L-lysyl-[protein] + acetyl-CoA = N(6)-biotinyl-L-lysyl-[protein] + malonyl-CoA. The protein operates within lipid metabolism; malonyl-CoA biosynthesis; malonyl-CoA from acetyl-CoA: step 1/1. In terms of biological role, component of the acetyl coenzyme A carboxylase (ACC) complex. Biotin carboxylase (BC) catalyzes the carboxylation of biotin on its carrier protein (BCCP) and then the CO(2) group is transferred by the transcarboxylase to acetyl-CoA to form malonyl-CoA. The chain is Acetyl-coenzyme A carboxylase carboxyl transferase subunit beta from Azorhizobium caulinodans (strain ATCC 43989 / DSM 5975 / JCM 20966 / LMG 6465 / NBRC 14845 / NCIMB 13405 / ORS 571).